Here is a 421-residue protein sequence, read N- to C-terminus: Tyrosine--tRNA ligase (421 aa).

Y35 lines the L-tyrosine pocket. The 'HIGH' region motif lies at 40–49 (PTGPSLHAGH). Positions 169 and 173 each coordinate L-tyrosine. The short motif at 229–233 (KFGKS) is the 'KMSKS' region element. K232 provides a ligand contact to ATP. The region spanning 354–420 (RTIVDLLIAS…GKKNFAGVKI (67 aa)) is the S4 RNA-binding domain.

This sequence belongs to the class-I aminoacyl-tRNA synthetase family. TyrS type 1 subfamily. In terms of assembly, homodimer.

Its subcellular location is the cytoplasm. The catalysed reaction is tRNA(Tyr) + L-tyrosine + ATP = L-tyrosyl-tRNA(Tyr) + AMP + diphosphate + H(+). Catalyzes the attachment of tyrosine to tRNA(Tyr) in a two-step reaction: tyrosine is first activated by ATP to form Tyr-AMP and then transferred to the acceptor end of tRNA(Tyr). The polypeptide is Tyrosine--tRNA ligase (Corynebacterium efficiens (strain DSM 44549 / YS-314 / AJ 12310 / JCM 11189 / NBRC 100395)).